The primary structure comprises 101 residues: MATYITEDCINCGACEPECPNEAISEGDEIYVIDPELCTECVGFYDHEACQAVCPVECCLPNPQIVETEEVLIARAVRLHPDDGELKKRAAANDYPSRFRK.

4Fe-4S ferredoxin-type domains follow at residues 1–29 and 31–64; these read MATY…EGDE and YVID…PNPQ. 8 residues coordinate [4Fe-4S] cluster: Cys9, Cys12, Cys15, Cys19, Cys38, Cys41, Cys50, and Cys54.

It depends on [4Fe-4S] cluster as a cofactor.

In terms of biological role, ferredoxins are iron-sulfur proteins that transfer electrons in a wide variety of metabolic reactions. Fdx2 can receive electrons from both FdR_A and FdR_B ferredoxin reductases, with a preference for FdR_B compared with FdR_A, and transfer the electrons to the cytochrome P450 CYP260A1. This chain is Ferredoxin Fdx2, found in Sorangium cellulosum (strain So ce56) (Polyangium cellulosum (strain So ce56)).